A 149-amino-acid polypeptide reads, in one-letter code: Large ribosomal subunit protein uL22 (149 aa).

The protein belongs to the universal ribosomal protein uL22 family. In terms of assembly, part of the 50S ribosomal subunit.

Functionally, this protein binds specifically to 23S rRNA. It makes multiple contacts with different domains of the 23S rRNA in the assembled 50S subunit and ribosome. The globular domain of the protein is located near the polypeptide exit tunnel on the outside of the subunit, while an extended beta-hairpin is found that lines the wall of the exit tunnel in the center of the 70S ribosome. This Picrophilus torridus (strain ATCC 700027 / DSM 9790 / JCM 10055 / NBRC 100828 / KAW 2/3) protein is Large ribosomal subunit protein uL22.